A 371-amino-acid polypeptide reads, in one-letter code: Anhydro-N-acetylmuramic acid kinase (371 aa).

An ATP-binding site is contributed by 12-19 (GTSADGID).

The protein belongs to the anhydro-N-acetylmuramic acid kinase family.

The enzyme catalyses 1,6-anhydro-N-acetyl-beta-muramate + ATP + H2O = N-acetyl-D-muramate 6-phosphate + ADP + H(+). The protein operates within amino-sugar metabolism; 1,6-anhydro-N-acetylmuramate degradation. Its pathway is cell wall biogenesis; peptidoglycan recycling. Its function is as follows. Catalyzes the specific phosphorylation of 1,6-anhydro-N-acetylmuramic acid (anhMurNAc) with the simultaneous cleavage of the 1,6-anhydro ring, generating MurNAc-6-P. Is required for the utilization of anhMurNAc either imported from the medium or derived from its own cell wall murein, and thus plays a role in cell wall recycling. The chain is Anhydro-N-acetylmuramic acid kinase from Saccharophagus degradans (strain 2-40 / ATCC 43961 / DSM 17024).